The following is a 370-amino-acid chain: Peptide chain release factor 2 (370 aa).

An N5-methylglutamine modification is found at Q249.

Belongs to the prokaryotic/mitochondrial release factor family. Post-translationally, methylated by PrmC. Methylation increases the termination efficiency of RF2.

Its subcellular location is the cytoplasm. Functionally, peptide chain release factor 2 directs the termination of translation in response to the peptide chain termination codons UGA and UAA. This Kosmotoga olearia (strain ATCC BAA-1733 / DSM 21960 / TBF 19.5.1) protein is Peptide chain release factor 2.